The primary structure comprises 108 residues: uncharacterized protein (108 aa).

The interval 74-108 (TGSKKRDSKANSRSRPSGTITSRGARIGLQGYKSH) is disordered. Positions 84-95 (NSRSRPSGTITS) are enriched in polar residues.

This is an uncharacterized protein from Saccharomyces cerevisiae (strain ATCC 204508 / S288c) (Baker's yeast).